The following is a 398-amino-acid chain: Exodeoxyribonuclease 7 large subunit (398 aa).

Belongs to the XseA family. Heterooligomer composed of large and small subunits.

The protein resides in the cytoplasm. It carries out the reaction Exonucleolytic cleavage in either 5'- to 3'- or 3'- to 5'-direction to yield nucleoside 5'-phosphates.. Its function is as follows. Bidirectionally degrades single-stranded DNA into large acid-insoluble oligonucleotides, which are then degraded further into small acid-soluble oligonucleotides. This is Exodeoxyribonuclease 7 large subunit from Anaplasma phagocytophilum (strain HZ).